Here is a 261-residue protein sequence, read N- to C-terminus: Indole-3-glycerol phosphate synthase (261 aa).

The protein belongs to the TrpC family.

It catalyses the reaction 1-(2-carboxyphenylamino)-1-deoxy-D-ribulose 5-phosphate + H(+) = (1S,2R)-1-C-(indol-3-yl)glycerol 3-phosphate + CO2 + H2O. It participates in amino-acid biosynthesis; L-tryptophan biosynthesis; L-tryptophan from chorismate: step 4/5. This Burkholderia mallei (strain NCTC 10247) protein is Indole-3-glycerol phosphate synthase.